Reading from the N-terminus, the 437-residue chain is GTPase Obg (437 aa).

Residues 2 to 160 enclose the Obg domain; sequence SMFLDTAKIS…RQLELELKIL (159 aa). One can recognise an OBG-type G domain in the interval 161-338; it reads ADVGLVGFPS…LLEATAELLA (178 aa). GTP-binding positions include 167 to 174, 192 to 196, 214 to 217, 284 to 287, and 319 to 321; these read GFPSVGKS, FTTIV, DLPG, NKMD, and SSL. Mg(2+) is bound by residues serine 174 and threonine 194. An OCT domain is found at 359–437; the sequence is GFAEAEKEFE…IGKFEFEFVD (79 aa).

The protein belongs to the TRAFAC class OBG-HflX-like GTPase superfamily. OBG GTPase family. In terms of assembly, monomer. Requires Mg(2+) as cofactor.

The protein resides in the cytoplasm. An essential GTPase which binds GTP, GDP and possibly (p)ppGpp with moderate affinity, with high nucleotide exchange rates and a fairly low GTP hydrolysis rate. Plays a role in control of the cell cycle, stress response, ribosome biogenesis and in those bacteria that undergo differentiation, in morphogenesis control. This is GTPase Obg from Streptococcus pyogenes serotype M28 (strain MGAS6180).